The following is a 249-amino-acid chain: Adapter protein MecA (249 aa).

It belongs to the MecA family. As to quaternary structure, homodimer.

Its function is as follows. Enables the recognition and targeting of unfolded and aggregated proteins to the ClpC protease or to other proteins involved in proteolysis. This is Adapter protein MecA from Streptococcus thermophilus (strain CNRZ 1066).